Reading from the N-terminus, the 145-residue chain is Large ribosomal subunit protein uL15 (145 aa).

Residues 1–42 (MELHTLKATPGSRKAKHRVGRGHAAGKGKQAGRGQSGQTKRS) form a disordered region. Basic residues predominate over residues 13–26 (RKAKHRVGRGHAAG).

This sequence belongs to the universal ribosomal protein uL15 family. In terms of assembly, part of the 50S ribosomal subunit.

Its function is as follows. Binds to the 23S rRNA. The protein is Large ribosomal subunit protein uL15 of Metamycoplasma arthritidis (strain 158L3-1) (Mycoplasma arthritidis).